The sequence spans 212 residues: Peroxiredoxin 2 (212 aa).

Residues 7 to 162 (PLIGEKFPEM…ILRSIRALQL (156 aa)) form the Thioredoxin domain. The Cysteine sulfenic acid (-SOH) intermediate role is filled by C49. R125 provides a ligand contact to substrate.

The protein belongs to the peroxiredoxin family. Prx6 subfamily. In terms of assembly, homodecamer. Pentamer of dimers that assemble into a ring structure.

The protein localises to the cytoplasm. It carries out the reaction a hydroperoxide + [thioredoxin]-dithiol = an alcohol + [thioredoxin]-disulfide + H2O. Thiol-specific peroxidase that catalyzes the reduction of hydrogen peroxide and organic hydroperoxides to water and alcohols, respectively. Plays a role in cell protection against oxidative stress by detoxifying peroxides. This Sulfurisphaera tokodaii (strain DSM 16993 / JCM 10545 / NBRC 100140 / 7) (Sulfolobus tokodaii) protein is Peroxiredoxin 2.